We begin with the raw amino-acid sequence, 461 residues long: tRNA modification GTPase MnmE (461 aa).

(6S)-5-formyl-5,6,7,8-tetrahydrofolate contacts are provided by Arg23, Glu88, and Arg127. A TrmE-type G domain is found at 223–383 (GLNTVIVGKP…LKECIKNLFF (161 aa)). A K(+)-binding site is contributed by Asn233. GTP-binding positions include 233–238 (NVGKSS), 252–258 (TEIPGTT), and 277–280 (DTAG). Ser237 contacts Mg(2+). The K(+) site is built by Thr252, Ile254, and Thr257. Mg(2+) is bound at residue Thr258. Lys461 contributes to the (6S)-5-formyl-5,6,7,8-tetrahydrofolate binding site.

This sequence belongs to the TRAFAC class TrmE-Era-EngA-EngB-Septin-like GTPase superfamily. TrmE GTPase family. In terms of assembly, homodimer. Heterotetramer of two MnmE and two MnmG subunits. The cofactor is K(+).

The protein resides in the cytoplasm. Its function is as follows. Exhibits a very high intrinsic GTPase hydrolysis rate. Involved in the addition of a carboxymethylaminomethyl (cmnm) group at the wobble position (U34) of certain tRNAs, forming tRNA-cmnm(5)s(2)U34. In Clostridium botulinum (strain Loch Maree / Type A3), this protein is tRNA modification GTPase MnmE.